The chain runs to 484 residues: ATP synthase subunit beta (484 aa).

Position 168–175 (168–175) interacts with ATP; it reads GGAGVGKT.

Belongs to the ATPase alpha/beta chains family. F-type ATPases have 2 components, CF(1) - the catalytic core - and CF(0) - the membrane proton channel. CF(1) has five subunits: alpha(3), beta(3), gamma(1), delta(1), epsilon(1). CF(0) has three main subunits: a(1), b(2) and c(9-12). The alpha and beta chains form an alternating ring which encloses part of the gamma chain. CF(1) is attached to CF(0) by a central stalk formed by the gamma and epsilon chains, while a peripheral stalk is formed by the delta and b chains.

It localises to the cell membrane. It carries out the reaction ATP + H2O + 4 H(+)(in) = ADP + phosphate + 5 H(+)(out). Its function is as follows. Produces ATP from ADP in the presence of a proton gradient across the membrane. The catalytic sites are hosted primarily by the beta subunits. This is ATP synthase subunit beta from Renibacterium salmoninarum (strain ATCC 33209 / DSM 20767 / JCM 11484 / NBRC 15589 / NCIMB 2235).